Here is a 478-residue protein sequence, read N- to C-terminus: Glycogen synthase (478 aa).

ADP-alpha-D-glucose is bound at residue K16.

This sequence belongs to the glycosyltransferase 1 family. Bacterial/plant glycogen synthase subfamily.

The enzyme catalyses [(1-&gt;4)-alpha-D-glucosyl](n) + ADP-alpha-D-glucose = [(1-&gt;4)-alpha-D-glucosyl](n+1) + ADP + H(+). It participates in glycan biosynthesis; glycogen biosynthesis. Its function is as follows. Synthesizes alpha-1,4-glucan chains using ADP-glucose. The sequence is that of Glycogen synthase from Lachnospira eligens (strain ATCC 27750 / DSM 3376 / VPI C15-48 / C15-B4) (Eubacterium eligens).